Here is a 485-residue protein sequence, read N- to C-terminus: UBX domain-containing protein 11 (485 aa).

The interval Met1 to Arg26 is disordered. Residues His67–Asp143 adopt a coiled-coil conformation. The region spanning Leu224 to Pro288 is the SEP domain. In terms of domain architecture, UBX spans Pro386 to Leu463. 2 positions are modified to phosphoserine: Ser479 and Ser483.

Interacts with GNA12, GNA13, RND1, RND2 and RND3. As to expression, strongly expressed in testis. Also expressed in lung, brain and thymus.

The protein localises to the cytoplasm. It is found in the cytoskeleton. In terms of biological role, may be involved in the reorganization of actin cytoskeleton mediated by RND1, RND2 and RND3. Promotes RHOA activation mediated by GNA12 and GNA13. This is UBX domain-containing protein 11 (Ubxn11) from Rattus norvegicus (Rat).